The sequence spans 723 residues: Catalase-peroxidase (723 aa).

Residues 96 to 224 (WHAAGSYRVA…LAAVMMGLIY (129 aa)) constitute a cross-link (tryptophyl-tyrosyl-methioninium (Trp-Tyr) (with M-250)). His-97 acts as the Proton acceptor in catalysis. Positions 224 to 250 (YVNPEGVDGQPDPLKTAQDVRVTFARM) form a cross-link, tryptophyl-tyrosyl-methioninium (Tyr-Met) (with W-96). His-265 is a heme b binding site.

Belongs to the peroxidase family. Peroxidase/catalase subfamily. As to quaternary structure, homodimer or homotetramer. Requires heme b as cofactor. Formation of the three residue Trp-Tyr-Met cross-link is important for the catalase, but not the peroxidase activity of the enzyme.

The enzyme catalyses H2O2 + AH2 = A + 2 H2O. The catalysed reaction is 2 H2O2 = O2 + 2 H2O. In terms of biological role, bifunctional enzyme with both catalase and broad-spectrum peroxidase activity. This is Catalase-peroxidase from Leptothrix cholodnii (strain ATCC 51168 / LMG 8142 / SP-6) (Leptothrix discophora (strain SP-6)).